Reading from the N-terminus, the 220-residue chain is Guanylate kinase (220 aa).

The Guanylate kinase-like domain maps to G11 to R190. ATP is bound at residue S18–T25.

Belongs to the guanylate kinase family.

It is found in the cytoplasm. The catalysed reaction is GMP + ATP = GDP + ADP. Its function is as follows. Essential for recycling GMP and indirectly, cGMP. This Sphingopyxis alaskensis (strain DSM 13593 / LMG 18877 / RB2256) (Sphingomonas alaskensis) protein is Guanylate kinase.